The sequence spans 316 residues: Aspartate carbamoyltransferase catalytic subunit (316 aa).

Carbamoyl phosphate contacts are provided by arginine 66 and threonine 67. Lysine 94 serves as a coordination point for L-aspartate. Carbamoyl phosphate-binding residues include arginine 116, histidine 146, and glutamine 149. The L-aspartate site is built by arginine 179 and arginine 234. Carbamoyl phosphate-binding residues include glycine 275 and proline 276.

The protein belongs to the aspartate/ornithine carbamoyltransferase superfamily. ATCase family. As to quaternary structure, heterododecamer (2C3:3R2) of six catalytic PyrB chains organized as two trimers (C3), and six regulatory PyrI chains organized as three dimers (R2).

The enzyme catalyses carbamoyl phosphate + L-aspartate = N-carbamoyl-L-aspartate + phosphate + H(+). It functions in the pathway pyrimidine metabolism; UMP biosynthesis via de novo pathway; (S)-dihydroorotate from bicarbonate: step 2/3. Catalyzes the condensation of carbamoyl phosphate and aspartate to form carbamoyl aspartate and inorganic phosphate, the committed step in the de novo pyrimidine nucleotide biosynthesis pathway. The sequence is that of Aspartate carbamoyltransferase catalytic subunit from Nitrosomonas europaea (strain ATCC 19718 / CIP 103999 / KCTC 2705 / NBRC 14298).